Consider the following 274-residue polypeptide: Tail assembly protein Gp25 (274 aa).

The interval asparagine 221 to serine 250 is disordered. Positions proline 236–threonine 245 are enriched in basic and acidic residues.

Belongs to the L5likevirus tail assembly protein family. In terms of assembly, interacts with tail assembly protein Gp24 and tape measure protein.

In terms of biological role, promotes tail assembly by creating a scaffold for the tail tube proteins. The tail assembly proteins Gp24 and Gp25 would wrap the linear tape measure protein to create a tail assembly scaffold. It would allow polymerization of tail tube protein during which Gp24 and Gp25 are released and therefore are absent from the mature virion. The tail assembly protein Gp25 is produced by a rare -1 ribosomal frameshift. The ratio Gp24/Gp25 is important for proper tail assembly. This is Tail assembly protein Gp25 (25) from Mycobacterium phage D29 (Mycobacteriophage D29).